The primary structure comprises 468 residues: Aldehyde dehydrogenase family 3 member B1 (468 aa).

Met-1 carries the post-translational modification N-acetylmethionine. 188 to 193 (GSPRVG) lines the NAD(+) pocket. Catalysis depends on residues Glu-210 and Cys-244. Cys-463 carries S-palmitoyl cysteine lipidation. A Cysteine methyl ester modification is found at Cys-465. A lipid anchor (S-geranylgeranyl cysteine) is attached at Cys-465. A propeptide spans 466–468 (TLL) (removed in mature form).

Belongs to the aldehyde dehydrogenase family. Dually lipidated in the C-terminus; prenylation occurs prior to, and is a prerequisite for palmitoylation. It is also required for activity towards long-chain substrates. In terms of tissue distribution, highest expression in kidney and lung.

It localises to the cell membrane. The catalysed reaction is an aldehyde + NADP(+) + H2O = a carboxylate + NADPH + 2 H(+). It catalyses the reaction an aldehyde + NAD(+) + H2O = a carboxylate + NADH + 2 H(+). The enzyme catalyses a long-chain fatty aldehyde + NAD(+) + H2O = a long-chain fatty acid + NADH + 2 H(+). It carries out the reaction a medium-chain fatty aldehyde + NAD(+) + H2O = a medium-chain fatty acid + NADH + 2 H(+). The catalysed reaction is octanal + NAD(+) + H2O = octanoate + NADH + 2 H(+). It catalyses the reaction nonanal + NAD(+) + H2O = nonanoate + NADH + 2 H(+). The enzyme catalyses hexadecanoate + NADH + 2 H(+) = hexadecanal + NAD(+) + H2O. It carries out the reaction (2E)-octenal + NAD(+) + H2O = (2E)-octenoate + NADH + 2 H(+). The catalysed reaction is (E)-non-2-enal + NAD(+) + H2O = (E)-non-2-enoate + NADH + 2 H(+). It catalyses the reaction (E)-4-hydroxynon-2-enal + NAD(+) + H2O = (E)-4-hydroxynon-2-enoate + NADH + 2 H(+). The enzyme catalyses (2E)-hexadecenal + NAD(+) + H2O = (E)-hexadec-2-enoate + NADH + 2 H(+). It carries out the reaction benzaldehyde + NAD(+) + H2O = benzoate + NADH + 2 H(+). The catalysed reaction is a medium-chain fatty aldehyde + NADP(+) + H2O = a medium-chain fatty acid + NADPH + 2 H(+). It catalyses the reaction hexanal + NADP(+) + H2O = hexanoate + NADPH + 2 H(+). The enzyme catalyses octanal + NADP(+) + H2O = octanoate + NADPH + 2 H(+). It carries out the reaction nonanal + NADP(+) + H2O = nonanoate + NADPH + 2 H(+). The catalysed reaction is (2E)-octenal + NADP(+) + H2O = (2E)-octenoate + NADPH + 2 H(+). It catalyses the reaction (E)-non-2-enal + NADP(+) + H2O = (E)-non-2-enoate + NADPH + 2 H(+). The enzyme catalyses (E)-4-hydroxynon-2-enal + NADP(+) + H2O = (E)-4-hydroxynon-2-enoate + NADPH + 2 H(+). It carries out the reaction benzaldehyde + NADP(+) + H2O = benzoate + NADPH + 2 H(+). Its pathway is alcohol metabolism; ethanol degradation; acetate from ethanol: step 2/2. Oxidizes medium and long chain saturated and unsaturated fatty aldehydes generated in the plasma membrane into non-toxic fatty acids. May have a protective role against the cytotoxicity induced by lipid peroxidation. Short-chain fatty aldehydes are not good substrates. Can use both NADP(+) and NAD(+) as electron acceptor in vitro, however in vivo preference will depend on their tissue levels. Low activity towards acetaldehyde and 3,4-dihydroxyphenylacetaldehyde. Able to metabolize aromatic aldehydes such as benzaldehyde to their acid form. The sequence is that of Aldehyde dehydrogenase family 3 member B1 (ALDH3B1) from Homo sapiens (Human).